Consider the following 194-residue polypeptide: Ion-translocating oxidoreductase complex subunit A (194 aa).

6 helical membrane passes run 4–24 (LVLILVGAILVNNFVLVQFLG), 39–59 (IGLALATTFVLTLAAMCSYLL), 72–92 (LRTIGFILVIAVVVQFTEMLV), 102–122 (VLGIFLPLITTNCIVLGVALL), 135–155 (GINGFGAGLGFSLVLVLFAAM), and 172–192 (AIGLITAGLMSLAFMGFSGLI).

The protein belongs to the NqrDE/RnfAE family. The complex is composed of six subunits: RnfA, RnfB, RnfC, RnfD, RnfE and RnfG.

Its subcellular location is the cell inner membrane. Part of a membrane-bound complex that couples electron transfer with translocation of ions across the membrane. The sequence is that of Ion-translocating oxidoreductase complex subunit A from Azotobacter vinelandii (strain DJ / ATCC BAA-1303).